We begin with the raw amino-acid sequence, 750 residues long: NAD(P)H-quinone oxidoreductase subunit 5, chloroplastic (750 aa).

16 helical membrane-spanning segments follow: residues Trp-9–Phe-29, Trp-40–Ile-60, Ile-89–Ile-109, Phe-125–Ile-145, Ile-147–Thr-167, Gly-185–Phe-205, Ala-230–Leu-250, Thr-258–Ala-278, Leu-283–Leu-303, Leu-327–Ile-347, Ala-354–Ser-374, Thr-396–Ser-416, Trp-425–Tyr-445, Leu-548–Phe-568, Ile-607–Ile-627, and Leu-724–Phe-744.

It belongs to the complex I subunit 5 family. In terms of assembly, NDH is composed of at least 16 different subunits, 5 of which are encoded in the nucleus.

It is found in the plastid. Its subcellular location is the chloroplast thylakoid membrane. It catalyses the reaction a plastoquinone + NADH + (n+1) H(+)(in) = a plastoquinol + NAD(+) + n H(+)(out). It carries out the reaction a plastoquinone + NADPH + (n+1) H(+)(in) = a plastoquinol + NADP(+) + n H(+)(out). In terms of biological role, NDH shuttles electrons from NAD(P)H:plastoquinone, via FMN and iron-sulfur (Fe-S) centers, to quinones in the photosynthetic chain and possibly in a chloroplast respiratory chain. The immediate electron acceptor for the enzyme in this species is believed to be plastoquinone. Couples the redox reaction to proton translocation, and thus conserves the redox energy in a proton gradient. This is NAD(P)H-quinone oxidoreductase subunit 5, chloroplastic (ndhF) from Tecoma stans (Yellow bells).